The primary structure comprises 440 residues: Thymidine phosphorylase (440 aa).

This sequence belongs to the thymidine/pyrimidine-nucleoside phosphorylase family. In terms of assembly, homodimer.

The enzyme catalyses thymidine + phosphate = 2-deoxy-alpha-D-ribose 1-phosphate + thymine. Its pathway is pyrimidine metabolism; dTMP biosynthesis via salvage pathway; dTMP from thymine: step 1/2. The enzymes which catalyze the reversible phosphorolysis of pyrimidine nucleosides are involved in the degradation of these compounds and in their utilization as carbon and energy sources, or in the rescue of pyrimidine bases for nucleotide synthesis. The protein is Thymidine phosphorylase of Shigella flexneri serotype 5b (strain 8401).